The chain runs to 367 residues: Probable neutral protease 2 homolog MCYG_00239 (367 aa).

Positions 1–19 are cleaved as a signal peptide; that stretch reads MQVLVALAALSSLAAPVVG. The propeptide occupies 20–190; sequence FSIPRGVPVS…DGPFTRIDKR (171 aa). 3 cysteine pairs are disulfide-bonded: Cys-198-Cys-268, Cys-275-Cys-293, and Cys-307-Cys-367. Position 318 (His-318) interacts with Zn(2+). Glu-319 is a catalytic residue. Residues His-322 and Asp-333 each coordinate Zn(2+).

It belongs to the peptidase M35 family. Zn(2+) is required as a cofactor.

Its subcellular location is the secreted. The catalysed reaction is Preferential cleavage of bonds with hydrophobic residues in P1'. Also 3-Asn-|-Gln-4 and 8-Gly-|-Ser-9 bonds in insulin B chain.. Functionally, probable secreted metalloprotease that shows high activities on basic nuclear substrates such as histone and protamine. May be involved in virulence. The protein is Probable neutral protease 2 homolog MCYG_00239 of Arthroderma otae (strain ATCC MYA-4605 / CBS 113480) (Microsporum canis).